The following is a 201-amino-acid chain: Iron-sulfur flavoprotein AF_1896 (201 aa).

Residues Cys46, Cys49, Cys52, and Cys57 each coordinate [4Fe-4S] cluster.

It belongs to the SsuE family. Isf subfamily. In terms of assembly, homodimer. FMN is required as a cofactor. The cofactor is [4Fe-4S] cluster.

Functionally, redox-active protein probably involved in electron transport. The sequence is that of Iron-sulfur flavoprotein AF_1896 from Archaeoglobus fulgidus (strain ATCC 49558 / DSM 4304 / JCM 9628 / NBRC 100126 / VC-16).